Reading from the N-terminus, the 425-residue chain is Histidine--tRNA ligase (425 aa).

It belongs to the class-II aminoacyl-tRNA synthetase family. As to quaternary structure, homodimer.

The protein localises to the cytoplasm. It catalyses the reaction tRNA(His) + L-histidine + ATP = L-histidyl-tRNA(His) + AMP + diphosphate + H(+). The polypeptide is Histidine--tRNA ligase (Erwinia tasmaniensis (strain DSM 17950 / CFBP 7177 / CIP 109463 / NCPPB 4357 / Et1/99)).